The sequence spans 256 residues: Small ribosomal subunit protein eS1 (256 aa).

A2 carries the N-acetylalanine; partial modification.

Belongs to the eukaryotic ribosomal protein eS1 family. Component of the small ribosomal subunit. Mature ribosomes consist of a small (40S) and a large (60S) subunit. The 40S subunit contains about 33 different proteins and 1 molecule of RNA (18S). The 60S subunit contains about 49 different proteins and 3 molecules of RNA (25S, 5.8S and 5S).

The protein resides in the cytoplasm. The chain is Small ribosomal subunit protein eS1 from Lachancea thermotolerans (strain ATCC 56472 / CBS 6340 / NRRL Y-8284) (Yeast).